The primary structure comprises 359 residues: Fructose-like permease IIC component 2 (359 aa).

In terms of domain architecture, PTS EIIC type-2 spans 11 to 344; that stretch reads TRQHLMTGVS…KSLARKNGSS (334 aa). 9 helical membrane passes run 19–39, 60–80, 99–119, 135–155, 176–196, 216–236, 251–271, 290–310, and 314–334; these read VSHM…SVML, IGVA…GYSI, FGAG…VVHY, IFII…WGLG, SIVM…GGPV, VAIA…ATLI, AALV…AAAD, AALV…LPVV, and LGYI…VNVL.

It is found in the cell inner membrane. In terms of biological role, the phosphoenolpyruvate-dependent sugar phosphotransferase system (PTS), a major carbohydrate active -transport system, catalyzes the phosphorylation of incoming sugar substrates concomitant with their translocation across the cell membrane. In Escherichia coli (strain K12), this protein is Fructose-like permease IIC component 2 (frwC).